Here is a 233-residue protein sequence, read N- to C-terminus: MNTEEIINLIANSKKKNPLKVYLKGNLKEVDFSNVEFYGNDEFGILFCEEEDFKTIYETYKDSIINYRIERDRKNSAIPLADLSKYNARIEPGAIIRDLVEIGDGCVIMMGAVINIGACIKENTMIDMNVVIGGRAQIGKNCHIGAGAVIAGVIEPPSAQPVVIENNVLIGANAVVLEGVKVGQGSIIGAGSVVISDVEPYSVVAGVPAKFIKKVDDKTKAKTQLVEGLRKLK.

Belongs to the transferase hexapeptide repeat family. DapH subfamily.

The catalysed reaction is (S)-2,3,4,5-tetrahydrodipicolinate + acetyl-CoA + H2O = L-2-acetamido-6-oxoheptanedioate + CoA. The protein operates within amino-acid biosynthesis; L-lysine biosynthesis via DAP pathway; LL-2,6-diaminopimelate from (S)-tetrahydrodipicolinate (acetylase route): step 1/3. In terms of biological role, catalyzes the transfer of an acetyl group from acetyl-CoA to tetrahydrodipicolinate. This chain is 2,3,4,5-tetrahydropyridine-2,6-dicarboxylate N-acetyltransferase, found in Petrotoga mobilis (strain DSM 10674 / SJ95).